The chain runs to 473 residues: Glutamate--tRNA ligase 1 (473 aa).

The 'HIGH' region motif lies at 10–20 (PSPTGFLHIGG). Positions 252–256 (KLSKR) match the 'KMSKS' region motif. Lysine 255 contacts ATP.

Belongs to the class-I aminoacyl-tRNA synthetase family. Glutamate--tRNA ligase type 1 subfamily. As to quaternary structure, monomer.

The protein resides in the cytoplasm. It carries out the reaction tRNA(Glu) + L-glutamate + ATP = L-glutamyl-tRNA(Glu) + AMP + diphosphate. Its function is as follows. Catalyzes the attachment of glutamate to tRNA(Glu) in a two-step reaction: glutamate is first activated by ATP to form Glu-AMP and then transferred to the acceptor end of tRNA(Glu). This chain is Glutamate--tRNA ligase 1, found in Wolbachia pipientis wMel.